We begin with the raw amino-acid sequence, 481 residues long: 3-isopropylmalate dehydratase large subunit (481 aa).

[4Fe-4S] cluster contacts are provided by Cys-363, Cys-423, and Cys-426. Residues Asp-432–His-459 are disordered.

Belongs to the aconitase/IPM isomerase family. LeuC type 1 subfamily. Heterodimer of LeuC and LeuD. The cofactor is [4Fe-4S] cluster.

The catalysed reaction is (2R,3S)-3-isopropylmalate = (2S)-2-isopropylmalate. It participates in amino-acid biosynthesis; L-leucine biosynthesis; L-leucine from 3-methyl-2-oxobutanoate: step 2/4. In terms of biological role, catalyzes the isomerization between 2-isopropylmalate and 3-isopropylmalate, via the formation of 2-isopropylmaleate. The sequence is that of 3-isopropylmalate dehydratase large subunit from Corynebacterium glutamicum (strain ATCC 13032 / DSM 20300 / JCM 1318 / BCRC 11384 / CCUG 27702 / LMG 3730 / NBRC 12168 / NCIMB 10025 / NRRL B-2784 / 534).